Reading from the N-terminus, the 293-residue chain is Phosphatidate cytidylyltransferase (293 aa).

8 consecutive transmembrane segments (helical) span residues 6-26 (IISA…GGWY), 51-71 (IAPA…SATV), 73-93 (PHLT…YLLF), 97-117 (MATI…GYLP), 157-177 (LLVT…AYIM), 195-215 (VEGS…GAWY), 218-238 (WPYW…VSLL), and 273-293 (VFTA…LNNL).

This sequence belongs to the CDS family.

It localises to the cell membrane. The enzyme catalyses a 1,2-diacyl-sn-glycero-3-phosphate + CTP + H(+) = a CDP-1,2-diacyl-sn-glycerol + diphosphate. It participates in phospholipid metabolism; CDP-diacylglycerol biosynthesis; CDP-diacylglycerol from sn-glycerol 3-phosphate: step 3/3. In Synechocystis sp. (strain ATCC 27184 / PCC 6803 / Kazusa), this protein is Phosphatidate cytidylyltransferase (cdsA).